The following is a 148-amino-acid chain: Leghemoglobin 29 (148 aa).

Positions 2–148 constitute a Globin domain; that stretch reads EFTLRQEALV…LAVAIMKEMS (147 aa). At Tyr30 the chain carries Nitrated tyrosine. A heme b-binding site is contributed by Ser45. At Ser45 the chain carries Phosphoserine. An O2-binding site is contributed by His63. The heme b site is built by His95 and Lys98. A Nitrated tyrosine modification is found at Tyr136.

The protein belongs to the plant globin family. In terms of assembly, monomer. Nitrated in effective nodules and particularly in hypoxic conditions; this mechanism may play a protective role in the symbiosis by buffering toxic peroxynitrite NO(2)(-). Nitration level decrease during nodule senescence. Post-translationally, phosphorylation at Ser-45 disrupts the molecular environment of its porphyrin ring oxygen binding pocket, thus leading to a reduced oxygen consumption and to the delivery of oxygen O(2) to symbiosomes. As to expression, accumulates in root nodules after inoculation by bacteria of the genus Rhizobium. Expressed in mycorrhizal roots in the presence of the mycorrhizal fungus Glomus fasciculatum.

The protein resides in the cytoplasm. It is found in the cytosol. It localises to the nucleus. Leghemoglobin that reversibly binds oxygen O(2) through a pentacoordinated heme iron. In root nodules, facilitates the diffusion of oxygen to the bacteroids while preventing the bacterial nitrogenase from being inactivated by buffering dioxygen, nitric oxide and carbon monoxide, and promoting the formation of reactive oxygen species (ROS, e.g. H(2)O(2)). This role is essential for symbiotic nitrogen fixation (SNF). In Vicia faba (Broad bean), this protein is Leghemoglobin 29.